The primary structure comprises 353 residues: Keratocan (353 aa).

Positions 1-21 (MMTLKVCPSLLLLFLVHSVWT) are cleaved as a signal peptide. The LRRNT domain maps to 34–72 (EHWSHYTFECPQECFCPPSFPNALYCDNKGLKEIPAIPA). 2 cysteine pairs are disulfide-bonded: cysteine 43-cysteine 49 and cysteine 47-cysteine 59. LRR repeat units lie at residues 73–94 (RIWY…PFVN), 97–118 (HLRW…SGVL), 123–143 (RLLY…PLPV), 144–165 (GLEQ…VFSN), 168–188 (NLTM…QSDT), 194–214 (SLMQ…SIPA), 215–236 (NTLQ…YFSA), 239–262 (KVTF…GFNV), 264–283 (SILD…PINA), and 284–305 (HLEH…QICP). A glycan (N-linked (GlcNAc...) (keratan sulfate) asparagine) is linked at asparagine 94. Asparagine 168 carries N-linked (GlcNAc...) asparagine glycosylation. 2 N-linked (GlcNAc...) (keratan sulfate) asparagine glycosylation sites follow: asparagine 223 and asparagine 261. An N-linked (GlcNAc...) asparagine glycan is attached at asparagine 299. A disulfide bridge links cysteine 304 with cysteine 344.

It belongs to the small leucine-rich proteoglycan (SLRP) family. SLRP class II subfamily. Binds keratan sulfate chains.

Its subcellular location is the secreted. The protein resides in the extracellular space. The protein localises to the extracellular matrix. Plays an important role in generating and maintaining a transparent matrix within the corneal stroma. This is Keratocan (KERA) from Gallus gallus (Chicken).